Reading from the N-terminus, the 383-residue chain is Putative F-box protein At3g22650 (383 aa).

Residues 3–50 (SCERSLLPIDIIEEICCRIPVEYLTQFKLTCKQWFALLKDKRFIYKYL) form the F-box domain.

This chain is Putative F-box protein At3g22650, found in Arabidopsis thaliana (Mouse-ear cress).